The chain runs to 449 residues: MLCSLSLVLCGLLAGTRADPGGLLRLGMDIMNHEVQSAMEESHILEKMAAEASNPQPGGKAIKGLSNMKVKDVLEPVITLNFVPGVGISQCVSTGMTITGKSFTGGNMEINVVLNITATDRLLQDEEAGTPVFRSEGCEVILVSVKTNLPNNKAINKFVDSTLRKVLPGLMCPAIDAVLEYVNKKWAKLTDPMPVDKMGTVKYALTSPPATTASHIQVDFSPVVQLQEGQLIQLATDGSLPEFPEGSAKDSQLLLSATFLTAELALLQKSLEVKLKDKRVGKLPQNTRTLAGFIPQVAKTYHKPKPLLIKVKINKPPKVTMKAGKSLMHLHGSLEMFAARRHGKHPKSLFRLETHIGLEIHYSVQDNRLQMVTSMDSLLSLARESSSVGDFHEAELTGFITDYLQKAYIPVVNDVLHVGLPLPDLLAINYNLAELDIVEDALVLGLKTE.

The N-terminal stretch at Met-1 to Ala-18 is a signal peptide. Asn-115 is a glycosylation site (N-linked (GlcNAc...) asparagine). Cys-138 and Cys-172 are oxidised to a cystine.

It belongs to the BPI/LBP/Plunc superfamily. BPI/LBP family.

Its subcellular location is the secreted. The polypeptide is BPI fold-containing family B member 6 (Bpifb6) (Mus musculus (Mouse)).